The following is a 375-amino-acid chain: MENFPTEYFLNTSVRLLEYIRYRDSNYTREERIENLHYAYNKAAHHFAQPRQQQMLKVDPKRLQASLQTIVGMVVYSWAKVSKECMADLSIHYTYTLVLDDSSDDPHPAMLNYFDDLQAGREQSHPWWALVNEHFPNVLRHFGPFCSLNLIRSTMDFFEGCWIEQYNFGGFPGSDDYPQFLRRMNGLGHCVGASLWPKDLFDERKNFLEITTAVAQMENWMVWVNDLMSFYKEFDDERDQISLVKNFVTCHEITLDEALEKLTQETLHSSKQMVAVFADKDPQVMDTIECFMHGYVTWHLCDARYRLHEIYEKVKDQDTEDAKKFCKFFEQAANVGAVAPSEWAYPQVAQLANVRAKDDMKEGQKPILSSIELVE.

The protein belongs to the trichodiene synthase family.

It catalyses the reaction (2E,6E)-farnesyl diphosphate = trichodiene + diphosphate. It functions in the pathway sesquiterpene biosynthesis; trichothecene biosynthesis. In terms of biological role, TS is a member of the terpene cyclase group of enzymes. It catalyzes the isomerization and cyclization of farnesyl pyro-phosphate to form trichodiene, the first cyclic intermediate in the biosynthetic pathway for trichothecenes. It serves to branch trichothecene biosynthesis from the isoprenoid pathway. This is Trichodiene synthase (TRI5) from Fusarium mesoamericanum.